A 575-amino-acid chain; its full sequence is Isocitrate dehydrogenase kinase/phosphatase (575 aa).

ATP-binding positions include 316–322 (ARGDKGL) and K337. D372 is an active-site residue.

The protein belongs to the AceK family.

It is found in the cytoplasm. The catalysed reaction is L-seryl-[isocitrate dehydrogenase] + ATP = O-phospho-L-seryl-[isocitrate dehydrogenase] + ADP + H(+). Bifunctional enzyme which can phosphorylate or dephosphorylate isocitrate dehydrogenase (IDH) on a specific serine residue. This is a regulatory mechanism which enables bacteria to bypass the Krebs cycle via the glyoxylate shunt in response to the source of carbon. When bacteria are grown on glucose, IDH is fully active and unphosphorylated, but when grown on acetate or ethanol, the activity of IDH declines drastically concomitant with its phosphorylation. This Anaeromyxobacter sp. (strain Fw109-5) protein is Isocitrate dehydrogenase kinase/phosphatase.